The sequence spans 825 residues: Probable phosphoketolase (825 aa).

Belongs to the XFP family. Thiamine diphosphate is required as a cofactor.

The chain is Probable phosphoketolase from Schizosaccharomyces pombe (strain 972 / ATCC 24843) (Fission yeast).